A 505-amino-acid polypeptide reads, in one-letter code: Histidine ammonia-lyase (505 aa).

Residues 141–143 (ASG) constitute a cross-link (5-imidazolinone (Ala-Gly)). Ser142 is subject to 2,3-didehydroalanine (Ser).

It belongs to the PAL/histidase family. Contains an active site 4-methylidene-imidazol-5-one (MIO), which is formed autocatalytically by cyclization and dehydration of residues Ala-Ser-Gly.

It is found in the cytoplasm. The enzyme catalyses L-histidine = trans-urocanate + NH4(+). Its pathway is amino-acid degradation; L-histidine degradation into L-glutamate; N-formimidoyl-L-glutamate from L-histidine: step 1/3. The sequence is that of Histidine ammonia-lyase from Bacillus cereus (strain ZK / E33L).